Consider the following 217-residue polypeptide: MFVARKISPNCKPGVRGKHTLPKLPYDYAALEPIICREIMELHHQKHHQTYVNNLNAAEEQLEEAKSKSDTTKLIQLAPALRFNGGGHINHTIFWQNLSPNKTQPSDDLKKAIESQWKSLEEFKKELTTLTVAVQGSGWGWLGFNKKSGKLQLAALPNQDPLEASTGLIPLFGIDVWEHAYYLQYKNVRPSYVEAIWDIANWDDISCRFQEAKKLGC.

The transit peptide at 1–17 (MFVARKISPNCKPGVRG) directs the protein to the mitochondrion. Residues His-43, His-91, Asp-175, and His-179 each coordinate Mn(2+).

Belongs to the iron/manganese superoxide dismutase family. In terms of assembly, homotetramer. It depends on Mn(2+) as a cofactor.

It localises to the mitochondrion matrix. It catalyses the reaction 2 superoxide + 2 H(+) = H2O2 + O2. Functionally, destroys superoxide anion radicals which are normally produced within the cells and which are toxic to biological systems. The chain is Superoxide dismutase [Mn], mitochondrial (Sod2) from Drosophila melanogaster (Fruit fly).